Here is a 304-residue protein sequence, read N- to C-terminus: Ribosomal RNA large subunit methyltransferase F (304 aa).

This sequence belongs to the methyltransferase superfamily. METTL16/RlmF family.

It is found in the cytoplasm. The catalysed reaction is adenosine(1618) in 23S rRNA + S-adenosyl-L-methionine = N(6)-methyladenosine(1618) in 23S rRNA + S-adenosyl-L-homocysteine + H(+). In terms of biological role, specifically methylates the adenine in position 1618 of 23S rRNA. The sequence is that of Ribosomal RNA large subunit methyltransferase F from Klebsiella pneumoniae subsp. pneumoniae (strain ATCC 700721 / MGH 78578).